Here is a 303-residue protein sequence, read N- to C-terminus: MYYGFDIGGTKIALGVFDSGRQLQWEKRVPTPRDSYDAFLDAVCELVAEADRRFGCKGSVGIGIPGMPETEDGTLYAANVPAASGKPLRADLSARLDRDVRLDNDANCFALSEAWDDEFTQYSLVMGLILGTGVGGGLIFNGKPITGKSYITGEFGHMRLPVDALTMMGLDFPLRRCGCGQHGCIENYLSGRGFAWLYQHYYHQPLQAPEIIAFYDQGDEQARAHVERYLDLLAVCLGNILTIVDPDLVVIGGGLSNFPAITTQLAERLPRHLLPVARVPRIERARHGDAGGMRGAAFLHLTD.

Residues 4-11 and 133-140 each bind ATP; these read GFDIGGTK and GVGGGLIF. Zn(2+) is bound by residues histidine 157, cysteine 177, cysteine 179, and cysteine 184.

It belongs to the ROK (NagC/XylR) family. NagK subfamily.

It carries out the reaction N-acetyl-D-glucosamine + ATP = N-acetyl-D-glucosamine 6-phosphate + ADP + H(+). The protein operates within cell wall biogenesis; peptidoglycan recycling. Functionally, catalyzes the phosphorylation of N-acetyl-D-glucosamine (GlcNAc) derived from cell-wall degradation, yielding GlcNAc-6-P. This is N-acetyl-D-glucosamine kinase from Escherichia coli O127:H6 (strain E2348/69 / EPEC).